Reading from the N-terminus, the 473-residue chain is H(+)/Cl(-) exchange transporter ClcA (473 aa).

Residues 1–32 (MKTDTSTFLAQQIVRLRRRDQIRRLMQRDKTP) lie on the Cytoplasmic side of the membrane. The helical transmembrane segment at 33–69 (LAILFMAAVVGTLTGLVGVAFEKTVSWVQNMRIGALV) threads the bilayer. Over 70 to 76 (QVADHAF) the chain is Periplasmic. Residues 77–100 (LLWPLAFILSALLAMVGYFLVRKF) traverse the membrane as a helical segment. Residues 106 to 110 (GSGIP) carry the Selectivity filter part_1 motif. Position 107 (S107) interacts with chloride. Positions 109-116 (IPEIEGAL) form an intramembrane region, helical. Residues 117 to 123 (EELRPVR) lie on the Cytoplasmic side of the membrane. The next 2 helical transmembrane spans lie at 124–141 (WWRV…TLGA) and 148–166 (EGPT…LDVF). Residues 146–150 (GREGP) carry the Selectivity filter part_2 motif. Topologically, residues 167–176 (RMRSAEARHT) are cytoplasmic. 2 consecutive intramembrane regions (helical) follow at residues 177–189 (LLAT…LSAA) and 193–201 (PLAGILFII). Residues 202–214 (EEMRPQFRYNLIS) are Cytoplasmic-facing. A helical transmembrane segment spans residues 215–232 (IKAVFTGVIMSSIVFRIF). At 233-252 (NGEAPIIEVGKLSDAPVNTL) the chain is on the periplasmic side. Residues 253-281 (WLYLILGIIFGCVGPVFNSLVLRTQDMFQ) traverse the membrane as a helical segment. Topologically, residues 282-287 (RFHGGE) are cytoplasmic. Residues 288–309 (IKKWVLMGGAIGGLCGILGLIE) traverse the membrane as a helical segment. Residues 310-329 (PAAAGGGFNLIPIAAAGNFS) lie on the Periplasmic side of the membrane. 2 helical membrane-spanning segments follow: residues 330-349 (VGLL…LCFS) and 355-376 (GIFA…MAAA). The short motif at 355–359 (GIFAP) is the Selectivity filter part_3 element. 2 residues coordinate chloride: I356 and F357. Residues 377–386 (VLFPQYHPEA) are Periplasmic-facing. An intramembrane region (helical) is located at residues 387-401 (GTFAIAGMGALMAAS). Residues 402–404 (VRA) constitute an intramembrane region (note=Loop between two helices). An intramembrane region (helical) is located at residues 405 to 416 (PLTGIVLVLEMT). Positions 417 to 421 (DNYQL) form an intramembrane region, note=Loop between two helices. The chain crosses the membrane as a helical span at residues 422-438 (ILPMIITCLGATLLAQF). Over 439-473 (LGGKPLYSTILARTLAKQDAEQAAKNQNAPAGENT) the chain is Cytoplasmic. Y445 contributes to the chloride binding site.

Belongs to the chloride channel (TC 2.A.49) family. ClcA subfamily. In terms of assembly, homodimer.

The protein resides in the cell inner membrane. It carries out the reaction 2 chloride(in) + H(+)(out) = 2 chloride(out) + H(+)(in). Its function is as follows. Proton-coupled chloride transporter. Functions as antiport system and exchanges two chloride ions for 1 proton. Probably acts as an electrical shunt for an outwardly-directed proton pump that is linked to amino acid decarboxylation, as part of the extreme acid resistance (XAR) response. This Salmonella paratyphi A (strain AKU_12601) protein is H(+)/Cl(-) exchange transporter ClcA.